The sequence spans 83 residues: U-actitoxin-Avd8d (83 aa).

Positions 1 to 19 are cleaved as a signal peptide; that stretch reads MASTRLFVLLVIGTVLLCQ. Residues 20-38 constitute a propeptide that is removed on maturation; sequence VSGFLDELLAEHELPQDMT.

It belongs to the sea anemone 8 toxin family.

The protein resides in the secreted. It localises to the nematocyst. The protein is U-actitoxin-Avd8d of Anemonia viridis (Snakelocks anemone).